The following is a 509-amino-acid chain: Maturase K (509 aa).

The protein belongs to the intron maturase 2 family. MatK subfamily.

The protein resides in the plastid. It is found in the chloroplast. Functionally, usually encoded in the trnK tRNA gene intron. Probably assists in splicing its own and other chloroplast group II introns. In Sequoia sempervirens (California redwood), this protein is Maturase K.